The following is a 688-amino-acid chain: Polyribonucleotide nucleotidyltransferase (688 aa).

Positions 484 and 490 each coordinate Mg(2+). Residues 550–609 form the KH domain; that stretch reads PTTEIFNVAPDKIVEIIGQGGRVIKEIVEKFEVKIDLNKPSGEVKIMGNKERVLKTKEFI. The S1 motif domain occupies 626–688; sequence DEVLEAQVKR…NKGKIALDLA (63 aa).

It belongs to the polyribonucleotide nucleotidyltransferase family. Mg(2+) is required as a cofactor.

The protein localises to the cytoplasm. The enzyme catalyses RNA(n+1) + phosphate = RNA(n) + a ribonucleoside 5'-diphosphate. Functionally, involved in mRNA degradation. Catalyzes the phosphorolysis of single-stranded polyribonucleotides processively in the 3'- to 5'-direction. In Helicobacter pylori (strain P12), this protein is Polyribonucleotide nucleotidyltransferase.